The following is an 815-amino-acid chain: Serotype-specific mannosyltransferase WbdA (815 aa).

The interval 1 to 374 (MSRAIIENAG…WANTAHLAIE (374 aa)) is alpha-(1-&gt;2)-mannosyltransferase. Residues 431 to 804 (KLLVDISVLA…WKQSAEFLLK (374 aa)) form an alpha-(1-&gt;3)-mannosyltransferase region.

The protein belongs to the glycosyltransferase group 1 family. Glycosyltransferase 4 subfamily. In terms of assembly, monomer. Interacts with the C-terminal region of WbdD.

Its subcellular location is the cell inner membrane. It catalyses the reaction [alpha-D-Man-(1-&gt;3)-alpha-D-Man-(1-&gt;3)-alpha-D-Man-(1-&gt;2)-alpha-D-Man-(1-&gt;2)](n)-alpha-D-Man-(1-&gt;3)-alpha-D-Man-(1-&gt;3)-alpha-D-Man-(1-&gt;3)-alpha-D-GlcNAc-di-trans,octa-cis-undecaprenyl diphosphate + 2 GDP-alpha-D-mannose = alpha-D-Man-(1-&gt;2)-alpha-D-Man-(1-&gt;2)-[alpha-D-Man-(1-&gt;3)-alpha-D-Man-(1-&gt;3)-alpha-D-Man-(1-&gt;2)-alpha-D-Man-(1-&gt;2)](n)-alpha-D-Man-(1-&gt;3)-alpha-D-Man-(1-&gt;3)-alpha-D-Man-(1-&gt;3)-alpha-D-GlcNAc-di-trans,octa-cis-undecaprenyl diphosphate + 2 GDP + 2 H(+). It carries out the reaction alpha-D-Man-(1-&gt;2)-alpha-D-Man-(1-&gt;2)-[alpha-D-Man-(1-&gt;3)-alpha-D-Man-(1-&gt;3)-alpha-D-Man-(1-&gt;2)-alpha-D-Man-(1-&gt;2)](n)-alpha-D-Man-(1-&gt;3)-alpha-D-Man-(1-&gt;3)-alpha-D-Man-(1-&gt;3)-alpha-D-GlcNAc-di-trans,octa-cis-undecaprenyl diphosphate + 2 GDP-alpha-D-mannose = [alpha-D-Man-(1-&gt;3)-alpha-D-Man-(1-&gt;3)-alpha-D-Man-(1-&gt;2)-alpha-D-Man-(1-&gt;2)](n+1)-alpha-D-Man-(1-&gt;3)-alpha-D-Man-(1-&gt;3)-alpha-D-Man-(1-&gt;3)-alpha-D-GlcNAc-di-trans,octa-cis-undecaprenyl diphosphate + 2 GDP + 2 H(+). It functions in the pathway bacterial outer membrane biogenesis; LPS O-antigen biosynthesis. In terms of biological role, mannosyltransferase involved in the biosynthesis of the repeat unit of the lipopolysaccharide (LPS) O-antigen region. Catalyzes the polymerization of a tetrasaccharide repeat unit containing two alpha-(1-&gt;3)- and two alpha-(1-&gt;2)-linked mannopyranose residues. This Escherichia coli protein is Serotype-specific mannosyltransferase WbdA.